Consider the following 119-residue polypeptide: MANSKRTLFLKRRLRVRNKLRKVNAGRLRLSVHRSNKNISVQLIDDVKGVTLAAASTLEKDLGFVGKNNIEAATKVGSVIAERAKAAGVTEAYFDRGGFLYHGKVKALADAAREGGLKI.

The protein belongs to the universal ribosomal protein uL18 family. Part of the 50S ribosomal subunit; part of the 5S rRNA/L5/L18/L25 subcomplex. Contacts the 5S and 23S rRNAs.

In terms of biological role, this is one of the proteins that bind and probably mediate the attachment of the 5S RNA into the large ribosomal subunit, where it forms part of the central protuberance. This is Large ribosomal subunit protein uL18 from Ruegeria sp. (strain TM1040) (Silicibacter sp.).